Consider the following 256-residue polypeptide: Tryptophan synthase alpha chain (256 aa).

Residues Glu45 and Asp56 each act as proton acceptor in the active site.

Belongs to the TrpA family. As to quaternary structure, tetramer of two alpha and two beta chains.

It carries out the reaction (1S,2R)-1-C-(indol-3-yl)glycerol 3-phosphate + L-serine = D-glyceraldehyde 3-phosphate + L-tryptophan + H2O. The protein operates within amino-acid biosynthesis; L-tryptophan biosynthesis; L-tryptophan from chorismate: step 5/5. Its function is as follows. The alpha subunit is responsible for the aldol cleavage of indoleglycerol phosphate to indole and glyceraldehyde 3-phosphate. The sequence is that of Tryptophan synthase alpha chain from Christiangramia forsetii (strain DSM 17595 / CGMCC 1.15422 / KT0803) (Gramella forsetii).